The primary structure comprises 1309 residues: Putative receptor-type tyrosine-protein phosphatase mosPTP-1 (1309 aa).

Residues methionine 1 to alanine 36 form the signal peptide. Residues alanine 37–alanine 572 lie on the Extracellular side of the membrane. Residues asparagine 60, asparagine 107, asparagine 162, asparagine 257, asparagine 353, asparagine 389, asparagine 455, asparagine 501, and asparagine 513 are each glycosylated (N-linked (GlcNAc...) asparagine). 4 consecutive Fibronectin type-III domains span residues proline 147–glutamate 244, lysine 249–valine 347, lysine 350–serine 449, and alanine 450–histidine 553. Residues valine 573–leucine 593 traverse the membrane as a helical segment. The Cytoplasmic segment spans residues tryptophan 594–serine 1309. Tyrosine-protein phosphatase domains lie at phenylalanine 656 to alanine 921 and isoleucine 944 to methionine 1196. Residue cysteine 862 is the Phosphocysteine intermediate of the active site. A disordered region spans residues asparagine 1239–threonine 1269. Residues glycine 1256–threonine 1268 show a composition bias toward gly residues.

The protein belongs to the protein-tyrosine phosphatase family. Receptor class subfamily. As to quaternary structure, interacts with C-type lectin mosGCTL-1; the interaction probably mediates the recruitment of West Nile virus particles in complex with C-type lectin mosGCTL-1 to the cell surface. Interacts with C-type lectin mosGCTL-7; the interaction probably mediates the recruitment of Japanese encephalitis virus particles in complex with C-type lectin mosGCTL-7 to the cell surface. In terms of tissue distribution, salivary gland (at protein level). Hemolymph. Low-level expression in midgut.

The protein localises to the cell membrane. It catalyses the reaction O-phospho-L-tyrosyl-[protein] + H2O = L-tyrosyl-[protein] + phosphate. Its function is as follows. Putative protein tyrosine-protein phosphatase. Functionally, (Microbial infection) Facilitates West Nile virus infection in mosquitoes probably via recruiting West Nile virus particles in complex with C-type lectin mosGCTL-1 to the cell surface. In terms of biological role, (Microbial infection) Facilitates Japanese encephalitis virus infection in mosquitoes probably via recruiting Japanese encephalitis virus particles in complex with C-type lectin mosGCTL-7 to the cell surface. This is Putative receptor-type tyrosine-protein phosphatase mosPTP-1 from Aedes aegypti (Yellowfever mosquito).